Consider the following 382-residue polypeptide: MRVALVAGEHSGDRLGAGLIRAIRARCPEAEFDGVGGPLMQAEGLRSHYPMEALSVMGLVEVLRHLPRLLRIRRDLVARYRTDPPDVFVGIDLPDFNLSIERRLKAVGVPTVHYVSPQVWAWRQGRVRTIGRSVDRILALYPFEAEFYRRHGVPVDFVGHPAADRFPLQPDAGAARAALGLVDDGGGPWVALLPGSRLGEVQRHAELYARTVARLRERQPDVRFIAPLAWPGLRAVFYEALVQQGVSDAVQLFEGRADEVMAAADVVLTASGTATLEAMLLKRPMVVAYRLAPLTFWLMKRLVRVSHVSQPNLLAGEGLVEEYLQDAATPDNLAYALYRLLNDEPRSAYLRARFAELHGTLRRGADGQAAAAVLAAAGGNGS.

This sequence belongs to the LpxB family.

The enzyme catalyses a lipid X + a UDP-2-N,3-O-bis[(3R)-3-hydroxyacyl]-alpha-D-glucosamine = a lipid A disaccharide + UDP + H(+). Its pathway is bacterial outer membrane biogenesis; LPS lipid A biosynthesis. Its function is as follows. Condensation of UDP-2,3-diacylglucosamine and 2,3-diacylglucosamine-1-phosphate to form lipid A disaccharide, a precursor of lipid A, a phosphorylated glycolipid that anchors the lipopolysaccharide to the outer membrane of the cell. This chain is Lipid-A-disaccharide synthase, found in Alkalilimnicola ehrlichii (strain ATCC BAA-1101 / DSM 17681 / MLHE-1).